We begin with the raw amino-acid sequence, 310 residues long: Cytochrome f (310 aa).

Positions Met1 to Ala26 are cleaved as a signal peptide. Phe27, Cys47, Cys50, and His51 together coordinate heme. A helical membrane pass occupies residues Ile276–Lys296.

This sequence belongs to the cytochrome f family. In terms of assembly, the 4 large subunits of the cytochrome b6-f complex are cytochrome b6, subunit IV (17 kDa polypeptide, petD), cytochrome f and the Rieske protein, while the 4 small subunits are PetG, PetL, PetM and PetN. The complex functions as a dimer. Heme serves as cofactor.

The protein resides in the plastid. The protein localises to the chloroplast thylakoid membrane. Its function is as follows. Component of the cytochrome b6-f complex, which mediates electron transfer between photosystem II (PSII) and photosystem I (PSI), cyclic electron flow around PSI, and state transitions. In Gracilaria tenuistipitata var. liui (Red alga), this protein is Cytochrome f.